The chain runs to 182 residues: Putative manganese efflux pump MntP (182 aa).

A run of 6 helical transmembrane segments spans residues 6–26, 37–57, 71–91, 101–121, 131–151, and 162–182; these read LIPL…VSLG, ILYI…IGMV, HFAG…SSIL, IGIS…SVGL, VITI…GLFI, and YGEI…LFPI.

The protein belongs to the MntP (TC 9.B.29) family.

It localises to the cell membrane. In terms of biological role, probably functions as a manganese efflux pump. In Bacillus cereus (strain AH187), this protein is Putative manganese efflux pump MntP.